The primary structure comprises 337 residues: Dihydroorotate dehydrogenase (quinone) (337 aa).

FMN-binding positions include 62 to 66 and T86; that span reads AGLDK. K66 is a binding site for substrate. 111–115 is a substrate binding site; it reads NRMGF. FMN contacts are provided by N140 and N173. N173 is a substrate binding site. The active-site Nucleophile is the S176. N178 lines the substrate pocket. 2 residues coordinate FMN: K218 and T246. 247-248 contacts substrate; the sequence is NT. Residues G269, G298, and 319–320 contribute to the FMN site; that span reads YS.

Belongs to the dihydroorotate dehydrogenase family. Type 2 subfamily. Monomer. FMN serves as cofactor.

Its subcellular location is the cell membrane. The catalysed reaction is (S)-dihydroorotate + a quinone = orotate + a quinol. It functions in the pathway pyrimidine metabolism; UMP biosynthesis via de novo pathway; orotate from (S)-dihydroorotate (quinone route): step 1/1. Functionally, catalyzes the conversion of dihydroorotate to orotate with quinone as electron acceptor. The protein is Dihydroorotate dehydrogenase (quinone) of Wigglesworthia glossinidia brevipalpis.